The chain runs to 366 residues: Alanine racemase (366 aa).

The active-site Proton acceptor; specific for D-alanine is K40. N6-(pyridoxal phosphate)lysine is present on K40. R136 contributes to the substrate binding site. The active-site Proton acceptor; specific for L-alanine is the Y263. M310 lines the substrate pocket.

The protein belongs to the alanine racemase family. It depends on pyridoxal 5'-phosphate as a cofactor.

The catalysed reaction is L-alanine = D-alanine. It functions in the pathway amino-acid biosynthesis; D-alanine biosynthesis; D-alanine from L-alanine: step 1/1. In terms of biological role, catalyzes the interconversion of L-alanine and D-alanine. May also act on other amino acids. This Streptococcus equi subsp. zooepidemicus (strain H70) protein is Alanine racemase (alr).